Reading from the N-terminus, the 201-residue chain is ADP-ribosylation factor-related protein 1 (201 aa).

Residue M1 is modified to N-acetylmethionine. GTP contacts are provided by residues G24 to T31, D75 to Q79, and N134 to D137.

Belongs to the small GTPase superfamily. Arf family. As to quaternary structure, interacts with SYS1.

Its subcellular location is the golgi apparatus. The protein localises to the trans-Golgi network. Its function is as follows. Trans-Golgi-associated GTPase that regulates protein sorting. Controls the targeting of ARL1 and its effector to the trans-Golgi. Required for the lipidation of chylomicrons in the intestine and required for VLDL lipidation in the liver. This Bos taurus (Bovine) protein is ADP-ribosylation factor-related protein 1 (ARFRP1).